The chain runs to 531 residues: Acetate CoA-transferase YdiF (531 aa).

E333 acts as the 5-glutamyl coenzyme A thioester intermediate in catalysis.

It belongs to the 3-oxoacid CoA-transferase family. As to quaternary structure, homotetramer; dimer of dimers.

It catalyses the reaction an acyl-CoA + acetate = a carboxylate + acetyl-CoA. Functionally, coA transferase having broad substrate specificity for short-chain acyl-CoA thioesters with the activity decreasing when the length of the carboxylic acid chain exceeds four carbons. May play a role in short-chain fatty acid metabolism in E.coli. The chain is Acetate CoA-transferase YdiF (ydiF) from Escherichia coli (strain K12).